A 581-amino-acid chain; its full sequence is Coiled-coil domain-containing protein 102A (581 aa).

Disordered stretches follow at residues 1–61, 156–219, 496–517, and 534–581; these read MNHT…GLGC, QRVR…IGTD, QAEDELDEAHNQTRKLQRSLDE, and SRLR…LQIP. Residues 39-59 show a composition bias toward low complexity; the sequence is TPSPSGGTPSSSPPLLLSPGL. The stretch at 70–164 forms a coiled coil; it reads REELRLRELE…AQRVRAEQSS (95 aa). The span at 161 to 184 shows a compositional bias: polar residues; that stretch reads EQSSPENASTAPESISSTASTHSN. Over residues 185-202 the composition is skewed to basic and acidic residues; the sequence is QPREAEIKQDNQDEEGVR. Residues 270 to 541 are a coiled coil; it reads AALEEDTSKL…LQSRLRRQQN (272 aa). Over residues 559–581 the composition is skewed to acidic residues; sequence EDADGPPSDPDEDEEEELQLQIP.

The chain is Coiled-coil domain-containing protein 102A (ccdc102a) from Danio rerio (Zebrafish).